We begin with the raw amino-acid sequence, 285 residues long: Nucleotide-binding protein in ptsN-ptsO intergenic region (285 aa).

8–15 (GRSGSGKS) lines the ATP pocket. 60-63 (DARN) is a GTP binding site.

This sequence belongs to the RapZ-like family.

Its function is as follows. Displays ATPase and GTPase activities. The protein is Nucleotide-binding protein in ptsN-ptsO intergenic region of Stutzerimonas stutzeri (Pseudomonas stutzeri).